The following is a 248-amino-acid chain: Protein-lysine N-methyltransferase EFM5 (248 aa).

It belongs to the class I-like SAM-binding methyltransferase superfamily. EFM5 family.

Its subcellular location is the cytoplasm. In terms of biological role, S-adenosyl-L-methionine-dependent protein-lysine N-methyltransferase that trimethylates elongation factor 1-alpha (TEF1 and TEF2) at 'Lys-79'. Required for replication of Brome mosaic virus (BMV). The sequence is that of Protein-lysine N-methyltransferase EFM5 from Saccharomyces cerevisiae (strain ATCC 204508 / S288c) (Baker's yeast).